A 110-amino-acid chain; its full sequence is Large ribosomal subunit protein uL22 (110 aa).

This sequence belongs to the universal ribosomal protein uL22 family. Part of the 50S ribosomal subunit.

Its function is as follows. This protein binds specifically to 23S rRNA; its binding is stimulated by other ribosomal proteins, e.g. L4, L17, and L20. It is important during the early stages of 50S assembly. It makes multiple contacts with different domains of the 23S rRNA in the assembled 50S subunit and ribosome. In terms of biological role, the globular domain of the protein is located near the polypeptide exit tunnel on the outside of the subunit, while an extended beta-hairpin is found that lines the wall of the exit tunnel in the center of the 70S ribosome. This chain is Large ribosomal subunit protein uL22, found in Teredinibacter turnerae (strain ATCC 39867 / T7901).